The following is a 147-amino-acid chain: Ribosomal RNA large subunit methyltransferase H (147 aa).

S-adenosyl-L-methionine-binding positions include L64, G95, and 114–119 (LSSLTL).

It belongs to the RNA methyltransferase RlmH family. Homodimer.

The protein resides in the cytoplasm. It carries out the reaction pseudouridine(1915) in 23S rRNA + S-adenosyl-L-methionine = N(3)-methylpseudouridine(1915) in 23S rRNA + S-adenosyl-L-homocysteine + H(+). In terms of biological role, specifically methylates the pseudouridine at position 1915 (m3Psi1915) in 23S rRNA. This chain is Ribosomal RNA large subunit methyltransferase H, found in Polynucleobacter asymbioticus (strain DSM 18221 / CIP 109841 / QLW-P1DMWA-1) (Polynucleobacter necessarius subsp. asymbioticus).